The following is a 277-amino-acid chain: Membrane protein insertase YidC 2 (277 aa).

The first 22 residues, 1-22 (MKKYRKILAMLAVLAIVLVLSG), serve as a signal peptide directing secretion. Cys23 carries the N-palmitoyl cysteine lipid modification. Cys23 carries the S-diacylglycerol cysteine lipid modification. Transmembrane regions (helical) follow at residues 35–55 (FWDGLIILNFSRAIIWLSNLF), 60–80 (GLGIIVFTLIIRIIILPLMIF), 130–150 (ASMLPLLVQLPILIALYQAIW), 170–190 (PYYVLPILAAIFTFASSWLAM), and 208–228 (PVIILITAINVPSALSLYWVI). Basic and acidic residues predominate over residues 251–266 (EAKKQAERDRKRTLEK). The disordered stretch occupies residues 251-277 (EAKKQAERDRKRTLEKARKRAIRNHKR). The span at 267-277 (ARKRAIRNHKR) shows a compositional bias: basic residues.

The protein belongs to the OXA1/ALB3/YidC family. Type 2 subfamily.

The protein resides in the cell membrane. Required for the insertion and/or proper folding and/or complex formation of integral membrane proteins into the membrane. Involved in integration of membrane proteins that insert both dependently and independently of the Sec translocase complex, as well as at least some lipoproteins. The chain is Membrane protein insertase YidC 2 from Lactiplantibacillus plantarum (strain ATCC BAA-793 / NCIMB 8826 / WCFS1) (Lactobacillus plantarum).